Reading from the N-terminus, the 395-residue chain is LIM/homeobox protein Lhx3 (395 aa).

2 LIM zinc-binding domains span residues 28-78 (CAGC…CKDD) and 87-141 (CAAC…CKAD). Positions 154–213 (AKRPRTTITAKQLETLKNAYNNSPKPARHVREQLSSETGLDMRVVQVWFQNRRAKEKRLK) form a DNA-binding region, homeobox. Disordered stretches follow at residues 208–304 (KEKR…QDQY) and 363–383 (GPSS…PVSP). The span at 257 to 278 (DEPSMSEMNHSNGIYNSLNDSS) shows a compositional bias: polar residues.

Interacts with ldb1 and with the N-terminus of rnf12. In dorsal regions at neural tube and tailbud stages and in adults predominantly in the pituitary gland and weakly in the eye and brain.

It localises to the nucleus. Its function is as follows. Transcription factor. May be involved in the specification and maintenance of differentiation of distinct neuronal and neuroendocrine tissues. Early marker for the pituitary and pineal lineages, it may be involved in specifying these lineages. This is LIM/homeobox protein Lhx3 (lhx3) from Xenopus laevis (African clawed frog).